A 346-amino-acid polypeptide reads, in one-letter code: Quinolinate synthase (346 aa).

Iminosuccinate contacts are provided by His-47 and Ser-68. Residue Cys-113 participates in [4Fe-4S] cluster binding. Residues Tyr-139–Asn-141 and Ser-156 contribute to the iminosuccinate site. Cys-200 lines the [4Fe-4S] cluster pocket. Iminosuccinate-binding positions include His-226–Glu-228 and Thr-243. [4Fe-4S] cluster is bound at residue Cys-297.

Belongs to the quinolinate synthase family. Type 1 subfamily. It depends on [4Fe-4S] cluster as a cofactor.

Its subcellular location is the cytoplasm. The enzyme catalyses iminosuccinate + dihydroxyacetone phosphate = quinolinate + phosphate + 2 H2O + H(+). It functions in the pathway cofactor biosynthesis; NAD(+) biosynthesis; quinolinate from iminoaspartate: step 1/1. In terms of biological role, catalyzes the condensation of iminoaspartate with dihydroxyacetone phosphate to form quinolinate. This chain is Quinolinate synthase, found in Pseudoalteromonas translucida (strain TAC 125).